A 782-amino-acid chain; its full sequence is MAAAAAAGPSPGSGPGDSPEGPEGEAPERRRKAHGMLKLYYGLSEGEAAGRPAGPDPLDPTDLNGAHFDPEVYLDKLRRECPLAQLMDSETDMVRQIRALDSDMQTLVYENYNKFISATDTIRKMKNDFRKMEDEMDRLATNMAVITDFSARISATLQDRHERITKLAGVHALLRKLQFLFELPSRLTKCVELGAYGQAVRYQGRAQAVLQQYQHLPSFRAIQDDCQVITARLAQQLRQRFREGGSGAPEQAECVELLLALGEPAEELCEEFLAHARGRLEKELRNLEAELGPSPPAPDVLEFTDHGGSGFVGGLCQVAAAYQELFAAQGPAGAEKLAAFARQLGSRYFALVERRLAQEQGGGDNSLLVRALDRFHRRLRAPGALLAAAGLADAATEIVERVARERLGHHLQGLRAAFLGCLTDVRQALAAPRVAGKEGPGLAELLANVASSILSHIKASLAAVHLFTAKEVSFSNKPYFRGEFCSQGVREGLIVGFVHSMCQTAQSFCDSPGEKGGATPPALLLLLSRLCLDYETATISYILTLTDEQFLVQDQFPVTPVSTLCAEARETARRLLTHYVKVQGLVISQMLRKSVETRDWLSTLEPRNVRAVMKRVVEDTTAIDVQVGLLYEEGVRKAQSSDSSKRTFSVYSSSRQQGRYAPSYTPSAPMDTNLLSNIQKLFSERIDVFSPVEFNKVSVLTGIIKISLKTLLECVRLRTFGRFGLQQVQVDCHFLQLYLWRFVADEELVHLLLDEVVASAALRCPDPVPMEPSVVEVICERG.

Over residues 1 to 19 (MAAAAAAGPSPGSGPGDSP) the composition is skewed to low complexity. The tract at residues 1–37 (MAAAAAAGPSPGSGPGDSPEGPEGEAPERRRKAHGML) is disordered. A2 is modified (N-acetylalanine). S18 and S44 each carry phosphoserine. Coiled-coil stretches lie at residues 116-147 (ISAT…AVIT) and 270-292 (EEFL…AELG). S649 is modified (phosphoserine).

This sequence belongs to the VPS51 family. In terms of assembly, component of the Golgi-associated retrograde protein (GARP) complex, also called VFT (VPS fifty-three) complex, composed of VPS51, VPS52, VPS53 and VPS54. Component of the endosome-associated retrograde protein (EARP) complex, composed of VPS51, VPS52, VPS53 and VPS50/Syndetin. EIPR1 interacts with both EARP and GARP complexes and mediates the recruitment of the GARP complex to the trans-Golgi network. Interacts with STX6 (via N-terminus). Interacts with VPS50 and VPS54 in an EIPR1-independent manner.

Its subcellular location is the golgi apparatus. The protein resides in the trans-Golgi network. It is found in the recycling endosome. Acts as a component of the GARP complex that is involved in retrograde transport from early and late endosomes to the trans-Golgi network (TGN). The GARP complex is required for the maintenance of protein retrieval from endosomes to the TGN, acid hydrolase sorting, lysosome function, endosomal cholesterol traffic and autophagy. VPS51 participates in retrograde transport of acid hydrolase receptors, likely by promoting tethering and SNARE-dependent fusion of endosome-derived carriers to the TGN. Acts as a component of the EARP complex that is involved in endocytic recycling. The EARP complex associates with Rab4-positive endosomes and promotes recycling of internalized transferrin receptor (TFRC) to the plasma membrane. This Homo sapiens (Human) protein is Vacuolar protein sorting-associated protein 51 homolog (VPS51).